A 352-amino-acid polypeptide reads, in one-letter code: Uroporphyrinogen decarboxylase (352 aa).

Substrate-binding positions include arginine 27 to arginine 31, aspartate 77, tyrosine 154, threonine 209, and histidine 325.

It belongs to the uroporphyrinogen decarboxylase family. As to quaternary structure, homodimer.

The protein resides in the cytoplasm. The enzyme catalyses uroporphyrinogen III + 4 H(+) = coproporphyrinogen III + 4 CO2. The protein operates within porphyrin-containing compound metabolism; protoporphyrin-IX biosynthesis; coproporphyrinogen-III from 5-aminolevulinate: step 4/4. Its function is as follows. Catalyzes the decarboxylation of four acetate groups of uroporphyrinogen-III to yield coproporphyrinogen-III. The chain is Uroporphyrinogen decarboxylase from Legionella pneumophila (strain Paris).